Here is a 330-residue protein sequence, read N- to C-terminus: Ferredoxin--NADP reductase 2 (330 aa).

The FAD site is built by E37, Q45, Y50, V90, F124, D286, and T327.

The protein belongs to the ferredoxin--NADP reductase type 2 family. In terms of assembly, homodimer. It depends on FAD as a cofactor.

It catalyses the reaction 2 reduced [2Fe-2S]-[ferredoxin] + NADP(+) + H(+) = 2 oxidized [2Fe-2S]-[ferredoxin] + NADPH. The protein is Ferredoxin--NADP reductase 2 of Shouchella clausii (strain KSM-K16) (Alkalihalobacillus clausii).